Here is a 449-residue protein sequence, read N- to C-terminus: Protein trichome birefringence-like 35 (449 aa).

Residues 12–29 (LPLAGLLFILVVTFMILF) traverse the membrane as a helical; Signal-anchor for type II membrane protein segment. Positions 185–187 (GDS) match the GDS motif motif. Residues 428 to 442 (DCTHWCVPGVPDVWN) carry the DCXHWCLPGXXDXWN motif motif.

It belongs to the PC-esterase family. TBL subfamily.

Its subcellular location is the membrane. May act as a bridging protein that binds pectin and other cell wall polysaccharides. Probably involved in maintaining esterification of pectins. May be involved in the specific O-acetylation of cell wall polymers. This chain is Protein trichome birefringence-like 35 (TBL35), found in Arabidopsis thaliana (Mouse-ear cress).